The chain runs to 896 residues: Protein translocase subunit SecA (896 aa).

Residues Gln-87, 105–109 (GEGKT), and Asp-507 each bind ATP. The tract at residues 853 to 879 (ESLSENDEASETQTFRRQEKKIGRNDP) is disordered. A compositionally biased stretch (basic and acidic residues) spans 866 to 876 (TFRRQEKKIGR). Positions 880, 882, 891, and 892 each coordinate Zn(2+).

The protein belongs to the SecA family. As to quaternary structure, monomer and homodimer. Part of the essential Sec protein translocation apparatus which comprises SecA, SecYEG and auxiliary proteins SecDF-YajC and YidC. Zn(2+) is required as a cofactor.

It is found in the cell inner membrane. Its subcellular location is the cytoplasm. The enzyme catalyses ATP + H2O + cellular proteinSide 1 = ADP + phosphate + cellular proteinSide 2.. Functionally, part of the Sec protein translocase complex. Interacts with the SecYEG preprotein conducting channel. Has a central role in coupling the hydrolysis of ATP to the transfer of proteins into and across the cell membrane, serving both as a receptor for the preprotein-SecB complex and as an ATP-driven molecular motor driving the stepwise translocation of polypeptide chains across the membrane. The sequence is that of Protein translocase subunit SecA from Legionella pneumophila (strain Corby).